Reading from the N-terminus, the 115-residue chain is U3-lycotoxin-Ls1p (115 aa).

An N-terminal signal peptide occupies residues 1-20 (MKFVLLFGVLLVTLFSYSSA). The propeptide occupies 21 to 44 (EMFDDFDQADEDELLSLIEKEEAR). 4 cysteine pairs are disulfide-bonded: Cys-48–Cys-63, Cys-55–Cys-72, Cys-62–Cys-87, and Cys-74–Cys-85.

The protein belongs to the neurotoxin 19 (CSTX) family. 01 subfamily. As to expression, expressed by the venom gland.

The protein localises to the secreted. The protein is U3-lycotoxin-Ls1p of Lycosa singoriensis (Wolf spider).